The chain runs to 503 residues: ATP synthase subunit alpha (503 aa).

169 to 176 contacts ATP; the sequence is GDRKTGKT.

The protein belongs to the ATPase alpha/beta chains family. F-type ATPases have 2 components, CF(1) - the catalytic core - and CF(0) - the membrane proton channel. CF(1) has five subunits: alpha(3), beta(3), gamma(1), delta(1), epsilon(1). CF(0) has three main subunits: a(1), b(2) and c(9-12). The alpha and beta chains form an alternating ring which encloses part of the gamma chain. CF(1) is attached to CF(0) by a central stalk formed by the gamma and epsilon chains, while a peripheral stalk is formed by the delta and b chains.

It localises to the cell membrane. The enzyme catalyses ATP + H2O + 4 H(+)(in) = ADP + phosphate + 5 H(+)(out). In terms of biological role, produces ATP from ADP in the presence of a proton gradient across the membrane. The alpha chain is a regulatory subunit. The sequence is that of ATP synthase subunit alpha from Lactobacillus johnsonii (strain CNCM I-12250 / La1 / NCC 533).